Consider the following 65-residue polypeptide: Large ribosomal subunit protein uL29 (65 aa).

The protein belongs to the universal ribosomal protein uL29 family.

The chain is Large ribosomal subunit protein uL29 from Dehalococcoides mccartyi (strain ATCC BAA-2266 / KCTC 15142 / 195) (Dehalococcoides ethenogenes (strain 195)).